The sequence spans 167 residues: Peptide deformylase (167 aa).

The Fe cation site is built by Cys91 and His133. Glu134 is a catalytic residue. His137 serves as a coordination point for Fe cation.

This sequence belongs to the polypeptide deformylase family. Fe(2+) is required as a cofactor.

It carries out the reaction N-terminal N-formyl-L-methionyl-[peptide] + H2O = N-terminal L-methionyl-[peptide] + formate. Its function is as follows. Removes the formyl group from the N-terminal Met of newly synthesized proteins. Requires at least a dipeptide for an efficient rate of reaction. N-terminal L-methionine is a prerequisite for activity but the enzyme has broad specificity at other positions. The sequence is that of Peptide deformylase from Neisseria meningitidis serogroup C (strain 053442).